The following is a 153-amino-acid chain: Methylglyoxal synthase (153 aa).

The 151-residue stretch at 3 to 153 (DQVNRPKGVT…SYLSRDVPGN (151 aa)) folds into the MGS-like domain. Substrate-binding positions include H19, K23, 45–48 (TGTT), and 65–66 (SG). The active-site Proton donor/acceptor is D71. Residue H98 coordinates substrate.

The protein belongs to the methylglyoxal synthase family.

The enzyme catalyses dihydroxyacetone phosphate = methylglyoxal + phosphate. In terms of biological role, catalyzes the formation of methylglyoxal from dihydroxyacetone phosphate. The protein is Methylglyoxal synthase of Hahella chejuensis (strain KCTC 2396).